Reading from the N-terminus, the 352-residue chain is C-glycoside deglycosidase alpha subunit (352 aa).

Mn(2+) is bound at residue Glu-147. His-149 (proton acceptor) is an active-site residue. Mn(2+) is bound by residues Asp-179, His-269, and Glu-305.

The protein belongs to the C-glycoside deglycosidase alpha subunit family. Heterodimer composed of an alpha subunit (CarB2) and a beta subunit (CarC2). Requires a divalent metal cation as cofactor.

It catalyses the reaction 3''-dehydroorientin = 1,5-anhydro-D-erythro-hex-1-en-3-ulose + luteolin. Activity is strongly reduced in the presence of chelating agents. Functionally, carbon-carbon bond-cleaving enzyme which participates in the metabolism of C-glycosides. Acts on the C8-glycosylated compound 3''-dehydroorientin (3''-oxo-orientin). The sequence is that of C-glycoside deglycosidase alpha subunit from Arthrobacter globiformis (strain ATCC 8010 / DSM 20124 / JCM 1332 / NBRC 12137 / NCIMB 8907 / NRRL B-2979 / 168).